The chain runs to 244 residues: Small ribosomal subunit protein eS4 (244 aa).

The segment covering 1–14 (MANKGPRKHLKRLP) has biased composition (basic residues). The segment at 1 to 36 (MANKGPRKHLKRLPAPKNWQISRKTNKYTTRPSAGP) is disordered. Over residues 19–32 (WQISRKTNKYTTRP) the composition is skewed to polar residues. Residues 43–106 (LPLLLVLRDL…NESFLVVLDE (64 aa)) enclose the S4 RNA-binding domain.

It belongs to the eukaryotic ribosomal protein eS4 family.

This Methanococcus aeolicus (strain ATCC BAA-1280 / DSM 17508 / OCM 812 / Nankai-3) protein is Small ribosomal subunit protein eS4.